A 63-amino-acid chain; its full sequence is Small ribosomal subunit protein eS27 (63 aa).

Zn(2+)-binding residues include Cys18, Cys21, Cys37, and Cys40. The C4-type zinc finger occupies Cys18–Cys40.

The protein belongs to the eukaryotic ribosomal protein eS27 family. In terms of assembly, part of the 30S ribosomal subunit. The cofactor is Zn(2+).

The chain is Small ribosomal subunit protein eS27 from Pyrococcus furiosus (strain ATCC 43587 / DSM 3638 / JCM 8422 / Vc1).